Consider the following 456-residue polypeptide: Argininosuccinate lyase (456 aa).

This sequence belongs to the lyase 1 family. Argininosuccinate lyase subfamily.

The protein localises to the cytoplasm. It catalyses the reaction 2-(N(omega)-L-arginino)succinate = fumarate + L-arginine. Its pathway is amino-acid biosynthesis; L-arginine biosynthesis; L-arginine from L-ornithine and carbamoyl phosphate: step 3/3. In Shewanella woodyi (strain ATCC 51908 / MS32), this protein is Argininosuccinate lyase.